A 358-amino-acid chain; its full sequence is Sulfate/thiosulfate import ATP-binding protein CysA (358 aa).

The ABC transporter domain occupies 3–237 (IKIENLEKHF…PQTPFVTQFV (235 aa)). 35-42 (GPSGCGKT) lines the ATP pocket.

It belongs to the ABC transporter superfamily. Sulfate/tungstate importer (TC 3.A.1.6) family. In terms of assembly, the complex is composed of two ATP-binding proteins (CysA), two transmembrane proteins (CysT and CysW) and a solute-binding protein (CysP).

Its subcellular location is the cell inner membrane. It catalyses the reaction sulfate(out) + ATP + H2O = sulfate(in) + ADP + phosphate + H(+). It carries out the reaction thiosulfate(out) + ATP + H2O = thiosulfate(in) + ADP + phosphate + H(+). Functionally, part of the ABC transporter complex CysAWTP involved in sulfate/thiosulfate import. Responsible for energy coupling to the transport system. The sequence is that of Sulfate/thiosulfate import ATP-binding protein CysA from Mannheimia succiniciproducens (strain KCTC 0769BP / MBEL55E).